The primary structure comprises 142 residues: Baculoviral IAP repeat-containing protein 5 (142 aa).

The BIR repeat unit spans residues 18–88 (RVSTFKNWPF…KHSSGCAFLS (71 aa)). At Ser-20 the chain carries Phosphoserine; by AURKC. Lys-23 is subject to N6-acetyllysine. At Thr-34 the chain carries Phosphothreonine; by CDK1 and CDK15. Thr-48 is subject to Phosphothreonine. Cys-57, Cys-60, His-77, and Cys-84 together coordinate Zn(2+). N6-acetyllysine occurs at positions 90, 110, 112, and 115. A Phosphothreonine; by AURKB modification is found at Thr-117. An N6-acetyllysine modification is found at Lys-129.

This sequence belongs to the IAP family. As to quaternary structure, monomer or homodimer. Exists as a homodimer in the apo state and as a monomer in the CPC-bound state. The monomer protects cells against apoptosis more efficiently than the dimer. Only the dimeric form is capable of enhancing tubulin stability in cells. When phosphorylated, interacts with LAMTOR5/HBXIP; the resulting complex binds pro-CASP9, as well as active CASP9, but much less efficiently. Component of the chromosomal passenger complex (CPC) composed of at least BIRC5/survivin, CDCA8/borealin, INCENP, AURKB or AURKC; in the complex forms a triple-helix bundle-based subcomplex with INCENP and CDCA8. Interacts with JTB. Interacts (via BIR domain) with histone H3 phosphorylated at 'Thr-3' (H3pT3). Interacts with EVI5. Interacts with GTP-bound RAN in both the S and M phases of the cell cycle. Interacts with USP9X. Interacts with tubulin. Interacts with BIRC2/c-IAP1. The acetylated form at Lys-129 interacts with STAT3. The monomeric form deacetylated at Lys-129 interacts with XPO1/CRM1. The monomeric form interacts with XIAP/BIRC4. Both the dimeric and monomeric form can interact with DIABLO/SMAC. Interacts with BIRC6/bruce. Interacts with FBXL7; this interaction facilitates the polyubiquitination and subsequent proteasomal degradation of BIRC5 by the SCF(FBXL7) E3 ubiquitin-protein ligase complex. In terms of processing, ubiquitinated by the Cul9-RING ubiquitin-protein ligase complex, leading to its degradation. Ubiquitination is required for centrosomal targeting. Deubiquitinated by USP35 or USP38; leading to stabilization. Post-translationally, acetylation at Lys-129 results in its homodimerization, while deacetylation promotes the formation of monomers which heterodimerize with XPO1/CRM1 which facilitates its nuclear export. The acetylated form represses STAT3 transactivation. The dynamic equilibrium between its acetylation and deacetylation at Lys-129 determines its interaction with XPO1/CRM1, its subsequent subcellular localization, and its ability to inhibit STAT3 transactivation. In vitro phosphorylation at Thr-117 by AURKB prevents interaction with INCENP and localization to mitotic chromosomes. Phosphorylation at Thr-48 by CK2 is critical for its mitotic and anti-apoptotic activities. Phosphorylation at Thr-34 by CDK15 is critical for its anti-apoptotic activity. Phosphorylation at Ser-20 by AURKC is critical for regulation of proper chromosome alignment and segregation, and possibly cytokinesis.

It is found in the cytoplasm. It localises to the nucleus. Its subcellular location is the chromosome. The protein localises to the centromere. The protein resides in the cytoskeleton. It is found in the spindle. It localises to the kinetochore. Its subcellular location is the midbody. Functionally, multitasking protein that has dual roles in promoting cell proliferation and preventing apoptosis. Component of a chromosome passage protein complex (CPC) which is essential for chromosome alignment and segregation during mitosis and cytokinesis. Acts as an important regulator of the localization of this complex; directs CPC movement to different locations from the inner centromere during prometaphase to midbody during cytokinesis and participates in the organization of the center spindle by associating with polymerized microtubules. Involved in the recruitment of CPC to centromeres during early mitosis via association with histone H3 phosphorylated at 'Thr-3' (H3pT3) during mitosis. The complex with RAN plays a role in mitotic spindle formation by serving as a physical scaffold to help deliver the RAN effector molecule TPX2 to microtubules. May counteract a default induction of apoptosis in G2/M phase. The acetylated form represses STAT3 transactivation of target gene promoters. May play a role in neoplasia. Inhibitor of CASP3 and CASP7. Essential for the maintenance of mitochondrial integrity and function. This Bos taurus (Bovine) protein is Baculoviral IAP repeat-containing protein 5 (BIRC5).